The chain runs to 313 residues: ADP-L-glycero-D-manno-heptose-6-epimerase (313 aa).

Residues 10–11 (MI), 31–32 (DN), lysine 38, arginine 53, 75–79 (EGACS), and asparagine 92 each bind NADP(+). The Proton acceptor role is filled by tyrosine 139. Lysine 143 is an NADP(+) binding site. Asparagine 174 contributes to the substrate binding site. Positions 175 and 183 each coordinate NADP(+). Lysine 183 functions as the Proton acceptor in the catalytic mechanism. Substrate is bound by residues serine 185, histidine 192, 206 to 209 (FAGS), arginine 214, and tyrosine 277.

It belongs to the NAD(P)-dependent epimerase/dehydratase family. HldD subfamily. As to quaternary structure, homopentamer. NADP(+) serves as cofactor.

The catalysed reaction is ADP-D-glycero-beta-D-manno-heptose = ADP-L-glycero-beta-D-manno-heptose. The protein operates within nucleotide-sugar biosynthesis; ADP-L-glycero-beta-D-manno-heptose biosynthesis; ADP-L-glycero-beta-D-manno-heptose from D-glycero-beta-D-manno-heptose 7-phosphate: step 4/4. It functions in the pathway bacterial outer membrane biogenesis; LPS core biosynthesis. Its function is as follows. Catalyzes the interconversion between ADP-D-glycero-beta-D-manno-heptose and ADP-L-glycero-beta-D-manno-heptose via an epimerization at carbon 6 of the heptose. This Vibrio vulnificus (strain YJ016) protein is ADP-L-glycero-D-manno-heptose-6-epimerase.